The sequence spans 542 residues: Chaperonin GroEL (542 aa).

ATP contacts are provided by residues 29-32, 86-90, glycine 413, 476-478, and aspartate 492; these read TLGP, DGTTT, and NAA.

It belongs to the chaperonin (HSP60) family. As to quaternary structure, forms a cylinder of 14 subunits composed of two heptameric rings stacked back-to-back. Interacts with the co-chaperonin GroES.

It is found in the cytoplasm. It carries out the reaction ATP + H2O + a folded polypeptide = ADP + phosphate + an unfolded polypeptide.. In terms of biological role, together with its co-chaperonin GroES, plays an essential role in assisting protein folding. The GroEL-GroES system forms a nano-cage that allows encapsulation of the non-native substrate proteins and provides a physical environment optimized to promote and accelerate protein folding. The polypeptide is Chaperonin GroEL (Listeria welshimeri serovar 6b (strain ATCC 35897 / DSM 20650 / CCUG 15529 / CIP 8149 / NCTC 11857 / SLCC 5334 / V8)).